We begin with the raw amino-acid sequence, 301 residues long: GTPase Era (301 aa).

In terms of domain architecture, Era-type G spans 7–175; it reads YCGFIAIVGR…AAIVRKHLPE (169 aa). Positions 15–22 are G1; the sequence is GRPNVGKS. 15-22 contributes to the GTP binding site; that stretch reads GRPNVGKS. Positions 41–45 are G2; it reads QTTRH. Residues 62-65 form a G3 region; it reads DTPG. GTP-binding positions include 62–66 and 124–127; these read DTPGL and NKVD. The G4 stretch occupies residues 124 to 127; the sequence is NKVD. A G5 region spans residues 154–156; the sequence is ISA. Positions 206–283 constitute a KH type-2 domain; that stretch reads LGAELPYSVT…HLELWVKVKS (78 aa).

This sequence belongs to the TRAFAC class TrmE-Era-EngA-EngB-Septin-like GTPase superfamily. Era GTPase family. As to quaternary structure, monomer.

Its subcellular location is the cytoplasm. It is found in the cell inner membrane. In terms of biological role, an essential GTPase that binds both GDP and GTP, with rapid nucleotide exchange. Plays a role in 16S rRNA processing and 30S ribosomal subunit biogenesis and possibly also in cell cycle regulation and energy metabolism. The protein is GTPase Era of Escherichia coli O157:H7.